A 251-amino-acid chain; its full sequence is Aliphatic sulfonates import ATP-binding protein SsuB (251 aa).

The ABC transporter domain occupies 19-238; the sequence is GELRHVDKWY…PGEPGAHTER (220 aa). Residue 51–58 participates in ATP binding; that stretch reads GRSGSGKS.

Belongs to the ABC transporter superfamily. Aliphatic sulfonates importer (TC 3.A.1.17.2) family. The complex is composed of two ATP-binding proteins (SsuB), two transmembrane proteins (SsuC) and a solute-binding protein (SsuA).

It is found in the cell membrane. The enzyme catalyses ATP + H2O + aliphatic sulfonate-[sulfonate-binding protein]Side 1 = ADP + phosphate + aliphatic sulfonateSide 2 + [sulfonate-binding protein]Side 1.. In terms of biological role, part of the ABC transporter complex SsuABC involved in aliphatic sulfonates import. Responsible for energy coupling to the transport system. This Mycobacterium avium (strain 104) protein is Aliphatic sulfonates import ATP-binding protein SsuB.